We begin with the raw amino-acid sequence, 281 residues long: Probable feruloyl esterase A (281 aa).

The signal sequence occupies residues 1-21 (MKQFSAKFALALSAAAGQALA). Disulfide bonds link cysteine 50/cysteine 279, cysteine 112/cysteine 115, and cysteine 248/cysteine 255. Aspartate 98 contributes to the substrate binding site. Residue asparagine 100 is glycosylated (N-linked (GlcNAc...) asparagine). Tyrosine 101 provides a ligand contact to substrate. Serine 154 functions as the Nucleophile in the catalytic mechanism. The N-linked (GlcNAc...) asparagine glycan is linked to asparagine 173. Residue aspartate 215 is the Charge relay system of the active site. Residue histidine 268 coordinates substrate. The active-site Charge relay system is the histidine 268.

This sequence belongs to the AB hydrolase superfamily. FaeA family.

The protein localises to the secreted. The enzyme catalyses feruloyl-polysaccharide + H2O = ferulate + polysaccharide.. Functionally, involved in degradation of plant cell walls. Hydrolyzes the feruloyl-arabinose ester bond in arabinoxylans, and the feruloyl-galactose ester bond in pectin. The polypeptide is Probable feruloyl esterase A (faeA) (Aspergillus terreus (strain NIH 2624 / FGSC A1156)).